Reading from the N-terminus, the 216-residue chain is Protein-L-isoaspartate O-methyltransferase 1 (216 aa).

S60 is a catalytic residue.

This sequence belongs to the methyltransferase superfamily. L-isoaspartyl/D-aspartyl protein methyltransferase family.

The protein resides in the cytoplasm. The catalysed reaction is [protein]-L-isoaspartate + S-adenosyl-L-methionine = [protein]-L-isoaspartate alpha-methyl ester + S-adenosyl-L-homocysteine. Catalyzes the methyl esterification of L-isoaspartyl residues in peptides and proteins that result from spontaneous decomposition of normal L-aspartyl and L-asparaginyl residues. It plays a role in the repair and/or degradation of damaged proteins. The chain is Protein-L-isoaspartate O-methyltransferase 1 (pcm1) from Archaeoglobus fulgidus (strain ATCC 49558 / DSM 4304 / JCM 9628 / NBRC 100126 / VC-16).